Consider the following 82-residue polypeptide: Small ribosomal subunit protein uS15 (82 aa).

The protein belongs to the universal ribosomal protein uS15 family. Part of the 30S ribosomal subunit. Forms a bridge to the 50S subunit in the 70S ribosome, contacting the 23S rRNA.

Its function is as follows. One of the primary rRNA binding proteins, it binds directly to 16S rRNA where it helps nucleate assembly of the platform of the 30S subunit by binding and bridging several RNA helices of the 16S rRNA. In terms of biological role, forms an intersubunit bridge (bridge B4) with the 23S rRNA of the 50S subunit in the ribosome. The chain is Small ribosomal subunit protein uS15 from Pelagibacter ubique (strain HTCC1062).